The chain runs to 225 residues: tRNA (guanine-N(1)-)-methyltransferase (225 aa).

S-adenosyl-L-methionine-binding positions include glycine 112 and isoleucine 132–leucine 137.

Belongs to the RNA methyltransferase TrmD family. As to quaternary structure, homodimer.

Its subcellular location is the cytoplasm. The enzyme catalyses guanosine(37) in tRNA + S-adenosyl-L-methionine = N(1)-methylguanosine(37) in tRNA + S-adenosyl-L-homocysteine + H(+). In terms of biological role, specifically methylates guanosine-37 in various tRNAs. In Bacteroides fragilis (strain ATCC 25285 / DSM 2151 / CCUG 4856 / JCM 11019 / LMG 10263 / NCTC 9343 / Onslow / VPI 2553 / EN-2), this protein is tRNA (guanine-N(1)-)-methyltransferase.